The sequence spans 913 residues: Chitin synthase 1 (913 aa).

The segment at 1 to 135 (MAYRGGGPND…QQPGAQTGGL (135 aa)) is disordered. N-linked (GlcNAc...) asparagine glycosylation is present at Asn25. Residues 41 to 56 (RDPHARGTSPYEHHLG) are compositionally biased toward basic and acidic residues. Residue Asn539 is glycosylated (N-linked (GlcNAc...) asparagine). The next 7 helical transmembrane spans lie at 566 to 586 (FFFH…WFSL), 625 to 645 (IINS…FVLA), 658 to 678 (IASF…SGYL), 712 to 732 (VILV…FMYL), 740 to 760 (SFPY…VYAF), 840 to 860 (TGLV…ITTD), and 881 to 901 (FLLY…LWFL).

This sequence belongs to the chitin synthase family. Class III subfamily.

The protein localises to the cell membrane. The enzyme catalyses [(1-&gt;4)-N-acetyl-beta-D-glucosaminyl](n) + UDP-N-acetyl-alpha-D-glucosamine = [(1-&gt;4)-N-acetyl-beta-D-glucosaminyl](n+1) + UDP + H(+). Its function is as follows. Polymerizes chitin, a structural polymer of the cell wall and septum, by transferring the sugar moiety of UDP-GlcNAc to the non-reducing end of the growing chitin polymer. Plays a role in cell wall integrity and is involved in tolerance to hyperosmotic conditions. Required to successfully penetrate the host plants and thus plays a key role in pathogenicity. This is Chitin synthase 1 from Verticillium dahliae (strain VdLs.17 / ATCC MYA-4575 / FGSC 10137) (Verticillium wilt).